Reading from the N-terminus, the 88-residue chain is Small ribosomal subunit protein uS15 (88 aa).

This sequence belongs to the universal ribosomal protein uS15 family. Part of the 30S ribosomal subunit. Forms a bridge to the 50S subunit in the 70S ribosome, contacting the 23S rRNA.

In terms of biological role, one of the primary rRNA binding proteins, it binds directly to 16S rRNA where it helps nucleate assembly of the platform of the 30S subunit by binding and bridging several RNA helices of the 16S rRNA. Its function is as follows. Forms an intersubunit bridge (bridge B4) with the 23S rRNA of the 50S subunit in the ribosome. This is Small ribosomal subunit protein uS15 from Geobacter sulfurreducens (strain ATCC 51573 / DSM 12127 / PCA).